The primary structure comprises 95 residues: MQVLVRDNNVDQALKALKKKMQREGIFREMKLRGHYEKPSEKKAREKAEAVRRARKLARKKMQREGLLPMKPKPVFGAGPGAGRGGPGAGARPPR.

The segment at 55–95 is disordered; the sequence is RKLARKKMQREGLLPMKPKPVFGAGPGAGRGGPGAGARPPR. The span at 78–89 shows a compositional bias: gly residues; that stretch reads AGPGAGRGGPGA.

This sequence belongs to the bacterial ribosomal protein bS21 family.

This Nitrobacter hamburgensis (strain DSM 10229 / NCIMB 13809 / X14) protein is Small ribosomal subunit protein bS21.